A 303-amino-acid polypeptide reads, in one-letter code: Taste receptor type 2 member 13 (303 aa).

The Extracellular portion of the chain corresponds to 1 to 7; the sequence is MESALPS. Residues 8–28 form a helical membrane-spanning segment; sequence IFTLVIIAEFIIGNLSNGFIV. The Cytoplasmic portion of the chain corresponds to 29-55; the sequence is LINCIDWVSKRELSSVDKLLIILAISR. The chain crosses the membrane as a helical span at residues 56–76; it reads IGLIWEILVSWFLALHSLAIF. At 77–85 the chain is on the extracellular side; it reads VSGTGLRIM. A helical transmembrane segment spans residues 86-106; the sequence is IFSWIVSNHFNLWLATILSIF. Topologically, residues 107-128 are cytoplasmic; the sequence is YLLKIASFSSPAFLYLKRRVNK. The chain crosses the membrane as a helical span at residues 129–149; that stretch reads VILMILLGTLVFLFLNLIQIN. At 150–184 the chain is on the extracellular side; the sequence is MLIKDWLDRYERNTTWNFSMSDFETFSVSVRFTMT. 2 N-linked (GlcNAc...) asparagine glycosylation sites follow: asparagine 162 and asparagine 166. A helical transmembrane segment spans residues 185-205; sequence MFSLTPFTVAFISFLLLVFSL. Over 206–232 the chain is Cytoplasmic; the sequence is QKHLQKMQLNYKGHRDPRTKVHTNALK. A helical transmembrane segment spans residues 233-253; that stretch reads IVISFLLLYASFFLSILISWI. Over 254 to 261 the chain is Extracellular; sequence SELYQNTV. Residues 262 to 282 traverse the membrane as a helical segment; that stretch reads IYMLCETIGAFYPSSHSFLLI. Topologically, residues 283–303 are cytoplasmic; it reads LGNAKLRQAFLLVAAKVWAKR.

The protein belongs to the G-protein coupled receptor T2R family.

Its subcellular location is the membrane. Receptor that may play a role in the perception of bitterness and is gustducin-linked. May play a role in sensing the chemical composition of the gastrointestinal content. The activity of this receptor may stimulate alpha gustducin, mediate PLC-beta-2 activation and lead to the gating of TRPM5. The sequence is that of Taste receptor type 2 member 13 (TAS2R13) from Pan troglodytes (Chimpanzee).